Here is a 351-residue protein sequence, read N- to C-terminus: Uroporphyrinogen decarboxylase (351 aa).

Substrate-binding positions include 25–29 (RQAGR), Asp-74, Tyr-151, Ser-206, and His-325.

It belongs to the uroporphyrinogen decarboxylase family. Homodimer.

The protein localises to the cytoplasm. The catalysed reaction is uroporphyrinogen III + 4 H(+) = coproporphyrinogen III + 4 CO2. Its pathway is porphyrin-containing compound metabolism; protoporphyrin-IX biosynthesis; coproporphyrinogen-III from 5-aminolevulinate: step 4/4. Functionally, catalyzes the decarboxylation of four acetate groups of uroporphyrinogen-III to yield coproporphyrinogen-III. In Chlorobium phaeovibrioides (strain DSM 265 / 1930) (Prosthecochloris vibrioformis (strain DSM 265)), this protein is Uroporphyrinogen decarboxylase.